A 257-amino-acid chain; its full sequence is Thiazole synthase (257 aa).

Residue lysine 96 is the Schiff-base intermediate with DXP of the active site. Residues glycine 157, 184 to 185, and 206 to 207 each bind 1-deoxy-D-xylulose 5-phosphate; these read AG and NT.

Belongs to the ThiG family. In terms of assembly, homotetramer. Forms heterodimers with either ThiH or ThiS.

The protein localises to the cytoplasm. It carries out the reaction [ThiS sulfur-carrier protein]-C-terminal-Gly-aminoethanethioate + 2-iminoacetate + 1-deoxy-D-xylulose 5-phosphate = [ThiS sulfur-carrier protein]-C-terminal Gly-Gly + 2-[(2R,5Z)-2-carboxy-4-methylthiazol-5(2H)-ylidene]ethyl phosphate + 2 H2O + H(+). The protein operates within cofactor biosynthesis; thiamine diphosphate biosynthesis. In terms of biological role, catalyzes the rearrangement of 1-deoxy-D-xylulose 5-phosphate (DXP) to produce the thiazole phosphate moiety of thiamine. Sulfur is provided by the thiocarboxylate moiety of the carrier protein ThiS. In vitro, sulfur can be provided by H(2)S. The protein is Thiazole synthase of Allorhizobium ampelinum (strain ATCC BAA-846 / DSM 112012 / S4) (Agrobacterium vitis (strain S4)).